The following is a 79-amino-acid chain: uncharacterized protein (79 aa).

The N-terminal stretch at 1-19 (MKYVALAFVLSLVILQISA) is a signal peptide. The interval 52–71 (RGRKSRTQSGRNQGKSTSDS) is disordered. A compositionally biased stretch (polar residues) spans 58–71 (TQSGRNQGKSTSDS).

In terms of tissue distribution, nacreous layer of shell (at protein level). Expressed primarily in the mantle with highest level in the mantle pallium and lower level in the mantle edge.

The protein localises to the secreted. This is an uncharacterized protein from Margaritifera margaritifera (Freshwater pearl mussel).